The primary structure comprises 268 residues: Putative carbamate hydrolase RutD (268 aa).

One can recognise an AB hydrolase-1 domain in the interval 24-243; sequence VILSAGLGGS…NATLDIAPWG (220 aa).

Belongs to the AB hydrolase superfamily. Hydrolase RutD family.

It carries out the reaction carbamate + 2 H(+) = NH4(+) + CO2. In terms of biological role, involved in pyrimidine catabolism. May facilitate the hydrolysis of carbamate, a reaction that can also occur spontaneously. The sequence is that of Putative carbamate hydrolase RutD from Caulobacter sp. (strain K31).